A 1206-amino-acid polypeptide reads, in one-letter code: Translocase of chloroplast 132, chloroplastic (1206 aa).

Gly-2 carries the N-acetylglycine modification. Positions 13-33 (REDKKLAEDRISDEQVVKNEL) form a coiled coil. 2 disordered regions span residues 33 to 75 (LVRS…SDDL) and 97 to 119 (VGDL…VGES). The span at 39–49 (VRDDNEDEVFE) shows a compositional bias: acidic residues. Residue Ser-195 is modified to Phosphoserine. Residues 233 to 499 (QTEQEVEEGE…TTTEADEHDE (267 aa)) form a disordered region. A compositionally biased stretch (polar residues) spans 309-324 (AYTSNIVTNASGDNEV). The span at 325–336 (SSAVTSSPLEES) shows a compositional bias: low complexity. Phosphoserine occurs at positions 337, 363, and 398. Polar residues predominate over residues 357–379 (LASSPHSYPESTEVHSNSGSPGV). Over residues 403-427 (KELEKQQSSRVHVDPEITENSHVET) the composition is skewed to basic and acidic residues. Positions 430-440 (EVVSSVSPTES) are enriched in low complexity. The segment covering 468–492 (APQQSRVNGNGSHNQFQQAEDSTTT) has biased composition (polar residues). The AIG1-type G domain maps to 572-801 (DFSCTIMVLG…KLQDNIPGRP (230 aa)). Residues 581–588 (GKSGVGKS) are G1. Residues 584 to 589 (GVGKSA) and 603 to 608 (DAFQMG) each bind GTP. Ser-588 provides a ligand contact to Mg(2+). Residues 603–606 (DAFQ) form a homodimerization region. Residues 607–611 (MGTKR) are G2. The G3 stretch occupies residues 628-631 (DTPG). The tract at residues 666-671 (RLDMQS) is homodimerization. Residues 700 to 703 (THAA) form a G4 region. GTP is bound by residues His-701 and 749–750 (EN). The tract at residues 749-751 (ENH) is G5. The disordered stretch occupies residues 824-862 (QPKLPEQQYGDEEDEDDLEESSDSDEESEYDQLPPFKSL). Acidic residues predominate over residues 832–853 (YGDEEDEDDLEESSDSDEESEY). The chain crosses the membrane as a helical span at residues 1182 to 1199 (LAMVAIVPLFKKLLSYYY).

It belongs to the TRAFAC class TrmE-Era-EngA-EngB-Septin-like GTPase superfamily. AIG1/Toc34/Toc159-like paraseptin GTPase family. TOC159 subfamily. In terms of assembly, homodimer. Part of the TOC core complex that includes 1 protein for the specific recognition of transit peptides surrounded by a ring composed of four proteins forming translocation channels, and four to five GTP-binding proteins providing energy. This core complex can interact with components of the TIC complex to form a larger import complex. Chloroplastic protein precursor such as prSS (precursor of the RuBisCO small subunit) interacts with these complexes. The TOC complex contains a specific subset of polar lipids such as digalactosyldiacylglyceride (DGDG), phosphatidylcholine (PC) and phosphatidylglycerol (PG). Requires Mg(2+) as cofactor. Post-translationally, phosphorylated by KOC1. Expressed in seedlings, leaves, flowers, and roots.

It is found in the plastid. The protein localises to the chloroplast outer membrane. It localises to the cytoplasm. Its function is as follows. GTPase involved in protein precursor import into chloroplasts. Seems to recognize chloroplast-destined precursor proteins and regulate their presentation to the translocation channel through GTP hydrolysis. Probably specialized in the import of nuclear encoded non-photosynthetic preproteins from the cytoplasm to the chloroplast. In Arabidopsis thaliana (Mouse-ear cress), this protein is Translocase of chloroplast 132, chloroplastic.